We begin with the raw amino-acid sequence, 454 residues long: UDP-glycosyltransferase 79A2 (454 aa).

UDP-alpha-D-glucose-binding positions include Ser-269, 330–331 (WV), 348–356 (HAGYGSVIE), and 370–373 (KVDQ).

It belongs to the UDP-glycosyltransferase family.

Its function is as follows. May glycosylate diterpenes or flavonols in leaves. The sequence is that of UDP-glycosyltransferase 79A2 from Stevia rebaudiana (Stevia).